Here is a 928-residue protein sequence, read N- to C-terminus: Protein Niban 1 (928 aa).

Gly2 carries the N-myristoyl glycine lipid modification. Residues Ser579, Ser582, Ser596, Ser602, and Ser646 each carry the phosphoserine modification. Residues 580–596 (VSSLTDLKPPTGSNQAS) show a composition bias toward polar residues. The disordered stretch occupies residues 580-600 (VSSLTDLKPPTGSNQASPARR). Disordered stretches follow at residues 618–654 (VFQESEEEKQPEVPSSLAKGESLSLPGPSPPPDGTEQ) and 669–707 (ATEDTAGLPGTCSSELEFGGTLEDEEPAQEEPEPITASG). Acidic residues predominate over residues 690–701 (LEDEEPAQEEPE). At Ser708 the chain carries Phosphoserine. Disordered stretches follow at residues 723–877 (PVDS…ATAS) and 899–928 (PNPDVLLSHKDDVKEGEGGQESFPELPSEE). A compositionally biased stretch (low complexity) spans 801–818 (GGLTEEPLGPMEGELPGE). Residues 825–834 (HEGRGGKCTE) are compositionally biased toward basic and acidic residues. Residues 865–877 (MGGQSSAAQATAS) show a composition bias toward low complexity. Residues 905-915 (LSHKDDVKEGE) are compositionally biased toward basic and acidic residues. Residue Ser926 is modified to Phosphoserine.

It belongs to the Niban family. In terms of tissue distribution, expressed in various types of thyroid tumor such as papillary thyroid carcinomas and oxyphilic thyroid tumors but not in normal thyroid tissue (at protein level). Strongly expressed in heart, skeletal muscle, pancreas, white blood cells and prostate with moderate expression in colon and spleen. Expressed in renal carcinoma cells but not in normal kidney.

It is found in the cytoplasm. Its subcellular location is the membrane. Regulates phosphorylation of a number of proteins involved in translation regulation including EIF2A, EIF4EBP1 and RPS6KB1. May be involved in the endoplasmic reticulum stress response. The protein is Protein Niban 1 of Homo sapiens (Human).